Here is a 589-residue protein sequence, read N- to C-terminus: 3-hydroxy-3-methylglutaryl coenzyme A reductase 2-B (589 aa).

The Lumenal segment spans residues 1 to 35; sequence MDVRRRPVTKTLTAGEPLKSQNQHSSSLKASDALP. A helical membrane pass occupies residues 36-56; it reads LPLYLTNGLFFTMFFSVMYFL. At 57-79 the chain is on the cytoplasmic side; the sequence is LHRWREKIRNSVPLHVVTLSELA. A helical membrane pass occupies residues 80–100; it reads ALVLLVASVIYLLGFFGIGFV. Topologically, residues 101 to 544 are lumenal; the sequence is QSLIRPSPDS…SKESPGPNSR (444 aa). A glycan (N-linked (GlcNAc...) asparagine) is linked at Asn-256. Glu-268 acts as the Charge relay system in catalysis. Asn-332 carries an N-linked (GlcNAc...) asparagine glycan. Catalysis depends on charge relay system residues Lys-400 and Asp-476. A helical transmembrane segment spans residues 545-565; the sequence is LLASIVAGSVLAGELSLMSAL. Residues 566 to 589 are Cytoplasmic-facing; it reads AAGQLVKSHMKFNRSSKDVSKLSS. Catalysis depends on His-574, which acts as the Proton donor.

Belongs to the HMG-CoA reductase family.

Its subcellular location is the endoplasmic reticulum membrane. It carries out the reaction (R)-mevalonate + 2 NADP(+) + CoA = (3S)-3-hydroxy-3-methylglutaryl-CoA + 2 NADPH + 2 H(+). The protein operates within metabolic intermediate biosynthesis; (R)-mevalonate biosynthesis; (R)-mevalonate from acetyl-CoA: step 3/3. In terms of biological role, catalyzes the synthesis of mevalonate, the specific precursor of all isoprenoid compounds present in plants. Component of the triterpene saponins (e.g. ginsenosides or panaxosides) and phytosterols biosynthetic pathways. Promotes triterpenes accumulation in roots. This Panax ginseng (Korean ginseng) protein is 3-hydroxy-3-methylglutaryl coenzyme A reductase 2-B.